Consider the following 425-residue polypeptide: Enolase (425 aa).

Gln-162 is a (2R)-2-phosphoglycerate binding site. The Proton donor role is filled by Glu-204. Asp-241, Glu-284, and Asp-311 together coordinate Mg(2+). 4 residues coordinate (2R)-2-phosphoglycerate: Lys-336, Arg-365, Ser-366, and Lys-387. Lys-336 functions as the Proton acceptor in the catalytic mechanism.

Belongs to the enolase family. The cofactor is Mg(2+).

Its subcellular location is the cytoplasm. The protein localises to the secreted. It localises to the cell surface. It carries out the reaction (2R)-2-phosphoglycerate = phosphoenolpyruvate + H2O. It functions in the pathway carbohydrate degradation; glycolysis; pyruvate from D-glyceraldehyde 3-phosphate: step 4/5. Its function is as follows. Catalyzes the reversible conversion of 2-phosphoglycerate (2-PG) into phosphoenolpyruvate (PEP). It is essential for the degradation of carbohydrates via glycolysis. In Brucella ovis (strain ATCC 25840 / 63/290 / NCTC 10512), this protein is Enolase.